A 101-amino-acid chain; its full sequence is Protein translation factor SUI1 homolog (101 aa).

This sequence belongs to the SUI1 family.

This is Protein translation factor SUI1 homolog from Methanosphaera stadtmanae (strain ATCC 43021 / DSM 3091 / JCM 11832 / MCB-3).